A 357-amino-acid chain; its full sequence is Dihydroorotate dehydrogenase (quinone) (357 aa).

Residues 61–65 and Thr85 each bind FMN; that span reads AGFDK. Lys65 is a binding site for substrate. 110 to 114 contributes to the substrate binding site; that stretch reads NRFGF. Asn141 and Asn172 together coordinate FMN. Asn172 serves as a coordination point for substrate. Ser175 (nucleophile) is an active-site residue. A substrate-binding site is contributed by Asn177. Residues Lys217 and Gly245 each coordinate FMN. Substrate is bound at residue 246–247; it reads NT. Residues Gly268, Gly297, and 318-319 each bind FMN; that span reads YS.

The protein belongs to the dihydroorotate dehydrogenase family. Type 2 subfamily. As to quaternary structure, monomer. It depends on FMN as a cofactor.

The protein localises to the cell membrane. It catalyses the reaction (S)-dihydroorotate + a quinone = orotate + a quinol. It functions in the pathway pyrimidine metabolism; UMP biosynthesis via de novo pathway; orotate from (S)-dihydroorotate (quinone route): step 1/1. In terms of biological role, catalyzes the conversion of dihydroorotate to orotate with quinone as electron acceptor. This chain is Dihydroorotate dehydrogenase (quinone), found in Xanthobacter autotrophicus (strain ATCC BAA-1158 / Py2).